The sequence spans 351 residues: UPF0764 protein C16orf89 homolog (351 aa).

The signal sequence occupies residues 1–25 (MKSLKMLYPLFMLLVLSSKIDLSNQ).

The protein belongs to the UPF0764 family. As to quaternary structure, homodimer.

The protein localises to the secreted. This is UPF0764 protein C16orf89 homolog from Danio rerio (Zebrafish).